Consider the following 260-residue polypeptide: Glutamate racemase (260 aa).

Substrate is bound by residues 7-8 and 39-40; these read DS and YG. Cysteine 71 acts as the Proton donor/acceptor in catalysis. 72–73 is a binding site for substrate; it reads NT. Cysteine 182 (proton donor/acceptor) is an active-site residue. Substrate is bound at residue 183–184; it reads TH.

This sequence belongs to the aspartate/glutamate racemases family.

The enzyme catalyses L-glutamate = D-glutamate. It participates in cell wall biogenesis; peptidoglycan biosynthesis. Provides the (R)-glutamate required for cell wall biosynthesis. The chain is Glutamate racemase from Sulfurihydrogenibium sp. (strain YO3AOP1).